We begin with the raw amino-acid sequence, 424 residues long: C4-dicarboxylate transport protein (424 aa).

8 helical membrane passes run 4–24 (SLFKSLYFQVLAAIAIGVLLG), 44–64 (LIKMIIAPVIFCTVVSGIAGM), 76–96 (VALIYFEVVSTIALIIGLVVV), 142–162 (IGAFASGNILQVLLFAILFGF), 184–206 (VFFGIINMIMRLAPVGAFGAMAF), 222–242 (LIVCFYITCLLFVVVVLGLIA), 326–346 (IWHQITLLVVLLLSSKGAAGV), and 352–372 (IVLAATLSAVGHLPVAGLALI).

Belongs to the dicarboxylate/amino acid:cation symporter (DAACS) (TC 2.A.23) family.

It is found in the cell inner membrane. In terms of biological role, responsible for the transport of dicarboxylates such as succinate, fumarate, and malate from the periplasm across the membrane. The chain is C4-dicarboxylate transport protein from Erwinia tasmaniensis (strain DSM 17950 / CFBP 7177 / CIP 109463 / NCPPB 4357 / Et1/99).